Here is an 889-residue protein sequence, read N- to C-terminus: DNA mismatch repair protein MutS (889 aa).

Residue 622–629 participates in ATP binding; it reads GPNMAGKS. The disordered stretch occupies residues 869-889; sequence QRVKRPEKAPADVTAETEDQE.

The protein belongs to the DNA mismatch repair MutS family.

This protein is involved in the repair of mismatches in DNA. It is possible that it carries out the mismatch recognition step. This protein has a weak ATPase activity. The polypeptide is DNA mismatch repair protein MutS (Desulfatibacillum aliphaticivorans).